We begin with the raw amino-acid sequence, 191 residues long: Superoxide dismutase [Mn/Fe] (191 aa).

4 residues coordinate Fe(3+): histidine 27, histidine 74, aspartate 157, and histidine 161. Positions 27, 74, 157, and 161 each coordinate Mn(2+).

This sequence belongs to the iron/manganese superoxide dismutase family. In terms of assembly, homodimer. The cofactor is Mn(2+). Requires Fe(3+) as cofactor.

The enzyme catalyses 2 superoxide + 2 H(+) = H2O2 + O2. Inhibited by hydrogen peroxide. Functionally, destroys superoxide anion radicals which are normally produced within the cells and which are toxic to biological systems. Catalyzes the dismutation of superoxide anion radicals into O2 and H2O2 by successive reduction and oxidation of the transition metal ion at the active site. This chain is Superoxide dismutase [Mn/Fe] (sodB), found in Porphyromonas gingivalis (strain ATCC BAA-308 / W83).